Here is a 299-residue protein sequence, read N- to C-terminus: 4-diphosphocytidyl-2-C-methyl-D-erythritol kinase (299 aa).

The active site involves K17. An ATP-binding site is contributed by 99–109; the sequence is PLASGLGGGSS. D142 is an active-site residue.

It belongs to the GHMP kinase family. IspE subfamily.

The enzyme catalyses 4-CDP-2-C-methyl-D-erythritol + ATP = 4-CDP-2-C-methyl-D-erythritol 2-phosphate + ADP + H(+). It participates in isoprenoid biosynthesis; isopentenyl diphosphate biosynthesis via DXP pathway; isopentenyl diphosphate from 1-deoxy-D-xylulose 5-phosphate: step 3/6. In terms of biological role, catalyzes the phosphorylation of the position 2 hydroxy group of 4-diphosphocytidyl-2C-methyl-D-erythritol. The protein is 4-diphosphocytidyl-2-C-methyl-D-erythritol kinase of Deinococcus radiodurans (strain ATCC 13939 / DSM 20539 / JCM 16871 / CCUG 27074 / LMG 4051 / NBRC 15346 / NCIMB 9279 / VKM B-1422 / R1).